The primary structure comprises 267 residues: Indole-3-glycerol phosphate synthase (267 aa).

Belongs to the TrpC family.

It catalyses the reaction 1-(2-carboxyphenylamino)-1-deoxy-D-ribulose 5-phosphate + H(+) = (1S,2R)-1-C-(indol-3-yl)glycerol 3-phosphate + CO2 + H2O. Its pathway is amino-acid biosynthesis; L-tryptophan biosynthesis; L-tryptophan from chorismate: step 4/5. The polypeptide is Indole-3-glycerol phosphate synthase (Dichelobacter nodosus (strain VCS1703A)).